The sequence spans 462 residues: Toxin CfTX-2 (462 aa).

The signal sequence occupies residues 1–17 (MILVSLLPLLFMTGIAS).

Belongs to the jellyfish toxin family. Type I subfamily. In terms of assembly, oligomer. Contains disulfide bonds. As to expression, nematocytes.

Its subcellular location is the secreted. The protein localises to the nematocyst. The protein resides in the target cell membrane. May cause profound effects on the cardiovascular system of anesthetized rats (at 25 ug/kg), since the fraction containing this toxin and CfTX-1 produces an initial increase in mean arterial pressure, followed by cardiovascular collapse in all animals within 1 minute of injection. To note, the same fraction does not induce significant change in heart rate. Has weak hemolytic activity. Is lethal to crayfish. Causes cutaneous inflammation in humans. May act as a pore-forming toxin, disrupting normal transmembrane ion concentration gradients in susceptible cells. In Chironex fleckeri (Australian box jellyfish), this protein is Toxin CfTX-2.